A 139-amino-acid chain; its full sequence is Acidic phospholipase A2 S1E6-c (139 aa).

An N-terminal signal peptide occupies residues 1–16; the sequence is MRTLWILAVLLVGVEG. 7 cysteine pairs are disulfide-bonded: Cys-42-Cys-132, Cys-44-Cys-60, Cys-59-Cys-111, Cys-65-Cys-139, Cys-66-Cys-104, Cys-73-Cys-97, and Cys-91-Cys-102. Tyr-43, Gly-45, and Gly-47 together coordinate Ca(2+). The active site involves His-63. Asp-64 serves as a coordination point for Ca(2+). Residue Asp-105 is part of the active site.

The protein belongs to the phospholipase A2 family. Group II subfamily. D49 sub-subfamily. As to quaternary structure, homodimer. It depends on Ca(2+) as a cofactor. Expressed by the venom gland.

The protein resides in the secreted. It carries out the reaction a 1,2-diacyl-sn-glycero-3-phosphocholine + H2O = a 1-acyl-sn-glycero-3-phosphocholine + a fatty acid + H(+). Its function is as follows. Snake venom phospholipase A2 (PLA2) that inhibits ADP-induced platelet aggregation. PLA2 catalyzes the calcium-dependent hydrolysis of the 2-acyl groups in 3-sn-phosphoglycerides. In Calloselasma rhodostoma (Malayan pit viper), this protein is Acidic phospholipase A2 S1E6-c.